The sequence spans 201 residues: Ribosome maturation factor RimP (201 aa).

The protein belongs to the RimP family.

It is found in the cytoplasm. Functionally, required for maturation of 30S ribosomal subunits. This chain is Ribosome maturation factor RimP, found in Rhizobium johnstonii (strain DSM 114642 / LMG 32736 / 3841) (Rhizobium leguminosarum bv. viciae).